The primary structure comprises 121 residues: Methylglyoxal synthase (121 aa).

Residues 1 to 121 enclose the MGS-like domain; sequence MMKVALIAHD…SAELFLRALN (121 aa). Residues His9, Lys13, 35–38, and 55–56 contribute to the substrate site; these read TGTT and SG. The active-site Proton donor/acceptor is the Asp61. His88 is a substrate binding site.

It belongs to the methylglyoxal synthase family.

The catalysed reaction is dihydroxyacetone phosphate = methylglyoxal + phosphate. Catalyzes the formation of methylglyoxal from dihydroxyacetone phosphate. The chain is Methylglyoxal synthase from Carboxydothermus hydrogenoformans (strain ATCC BAA-161 / DSM 6008 / Z-2901).